The chain runs to 752 residues: MDDDHKVSNDISLLPDLNFDSSSPFTSIEFDSSICDLLNLETGGDTPNLIPDHNPFFDSFDGLQEEEEDSHFVVEPESPKVYIAPRVMINHQDSFSLDSRNDEYIEDVKILPGSPGGIQDLGLSRLKVPGSPRAFVHPRSSGSPRFVSPTSPVLIDTAAPFESVKEAVSKFGGITDWKAHKIQTIERRKTVDQELEKIQEDMPDYKKQAVVAEEAKHQVVMELERTRNVVEELKLELEKAEKEEQQAKQDSDLAKLRVEEMEQGIAGEVSVAAKSQLEVAKARHLSAVSELGTIREEIEMVSNEYESLLTEKDLAAKKAEDSVLKAKDVEKQMEGLTMEVIATKQLLELAHATHLEAQEKKLDAAMARDQDVYNQEKELKMVEDEIKRFRQDIDAADDVKTKLKTASALQQDLRAEIAAYKDSNMGKRNNSDIQAAVDSARKELEEVISNIEKANSEVKTLKIIVGSLQSELAREKHDLSETRQRNREDTREEKCTEIAKKLQEASREAEEAKSLAIAAREELRKAKEESDEAKTGLSAVERQLMESKKEMEASRASEKLALAAIKALQETEYANKIEDISSSPKSIIISVEEYYELSKQAHEVEEAANRKLAEIVSKIEVAKEEESRILENLEEVSRETAIRKVELKEAMTKVEKARDGKVGMDHELRKWRSDNGNRSPEGGNKENLSKSKSALHQPTTFTFGEQASSSNVTPQASSSNVTPETETKKKKKRFSLLPKVFMFLSRKKSSNK.

Ser143 carries the phosphoserine modification. Coiled coils occupy residues 186–557 and 596–651; these read ERRK…SRAS and ELSK…KEAM. Residues 476-495 form a disordered region; the sequence is KHDLSETRQRNREDTREEKC. Basic and acidic residues predominate over residues 653-675; sequence KVEKARDGKVGMDHELRKWRSDN. The tract at residues 653 to 733 is disordered; sequence KVEKARDGKV…ETETKKKKKR (81 aa). Polar residues predominate over residues 690–723; the sequence is KSKSALHQPTTFTFGEQASSSNVTPQASSSNVTP.

It belongs to the WEB family.

The protein is Protein WEAK CHLOROPLAST MOVEMENT UNDER BLUE LIGHT-like 2 (WEL2) of Arabidopsis thaliana (Mouse-ear cress).